We begin with the raw amino-acid sequence, 104 residues long: Large ribosomal subunit protein uL23 (104 aa).

It belongs to the universal ribosomal protein uL23 family. Part of the 50S ribosomal subunit. Contacts protein L29, and trigger factor when it is bound to the ribosome.

Functionally, one of the early assembly proteins it binds 23S rRNA. One of the proteins that surrounds the polypeptide exit tunnel on the outside of the ribosome. Forms the main docking site for trigger factor binding to the ribosome. The chain is Large ribosomal subunit protein uL23 from Cupriavidus metallidurans (strain ATCC 43123 / DSM 2839 / NBRC 102507 / CH34) (Ralstonia metallidurans).